A 113-amino-acid polypeptide reads, in one-letter code: Mediator of RNA polymerase II transcription subunit 22 (113 aa).

This sequence belongs to the Mediator complex subunit 22 family. In terms of assembly, component of the Mediator complex.

The protein localises to the nucleus. Its function is as follows. Component of the Mediator complex, a coactivator involved in the regulated transcription of nearly all RNA polymerase II-dependent genes. Mediator functions as a bridge to convey information from gene-specific regulatory proteins to the basal RNA polymerase II transcription machinery. Mediator is recruited to promoters by direct interactions with regulatory proteins and serves as a scaffold for the assembly of a functional preinitiation complex with RNA polymerase II and the general transcription factors. This is Mediator of RNA polymerase II transcription subunit 22 (SRB6) from Candida glabrata (strain ATCC 2001 / BCRC 20586 / JCM 3761 / NBRC 0622 / NRRL Y-65 / CBS 138) (Yeast).